The following is a 420-amino-acid chain: MDVLSVSEINAQIKALLEATFLQVRVQGEVSNLTIHKVSGHAYFSLKDSQSVIRCVLFKGNANRLKFALKEGQEMVVFGGISVYVPRGDYQINCFEIEPKEIGSLTLALEQLKEKLRLKGYFDEANKLPKPHFPKRVAVITSQNSAAWADMKKIASKRWPMCELVCINTLMQGEGCVQSVVESIAYADSLHDTKNAFDAIVVARGGGSMEDLYSFNDEKIADALYLAKTFSMSAIGHESDFLLSDLVADLRASTPSNAMEILLPNSDEWLQKLDGFNVKLHRSFKILLHQKKAYLEHLADFLKRLSFENKHHLNALKLEKLKIALENKTLEFLRFKKTLLEKISTQTLTSPFLQTKTERLNALENALKLAHANLKLPQFGAFLSKNNQAIELEALKRGDKIELSNEKARASAEILSVDRV.

It belongs to the XseA family. In terms of assembly, heterooligomer composed of large and small subunits.

It localises to the cytoplasm. It catalyses the reaction Exonucleolytic cleavage in either 5'- to 3'- or 3'- to 5'-direction to yield nucleoside 5'-phosphates.. Its function is as follows. Bidirectionally degrades single-stranded DNA into large acid-insoluble oligonucleotides, which are then degraded further into small acid-soluble oligonucleotides. In Helicobacter pylori (strain P12), this protein is Exodeoxyribonuclease 7 large subunit.